Here is a 142-residue protein sequence, read N- to C-terminus: Large ribosomal subunit protein uL11 (142 aa).

The protein belongs to the universal ribosomal protein uL11 family. Part of the ribosomal stalk of the 50S ribosomal subunit. Interacts with L10 and the large rRNA to form the base of the stalk. L10 forms an elongated spine to which L12 dimers bind in a sequential fashion forming a multimeric L10(L12)X complex. In terms of processing, one or more lysine residues are methylated.

Forms part of the ribosomal stalk which helps the ribosome interact with GTP-bound translation factors. This is Large ribosomal subunit protein uL11 from Yersinia pestis bv. Antiqua (strain Angola).